We begin with the raw amino-acid sequence, 248 residues long: Protein PARTING DANCERS homolog (248 aa).

Residues M1 to W10 show a composition bias toward polar residues. The segment at M1–R25 is disordered.

Belongs to the ERCC1/RAD10/SWI10 family. Interacts with SHOC1 (via C-terminus). Interacts with HEI10. Highly expressed in anthers and pistil during meiosis. Expressed in pollen mother cells (PMCs) during meiosis. Expressed at low levels in roots, shoots, leaves, flowers, and glumes.

It is found in the chromosome. It localises to the nucleus. The protein localises to the cytoplasm. Its subcellular location is the cell membrane. Essential for normal crossover (CO) formation during meiosis. Essential component for the formation of class I meiotic COs. Interacts with SHOC1, another meiotic component, to regulate CO formation, possibly by stabilizing the recombination intermediates during meiosis. PTD and SHOC1 may form transient heterotrimeric or heterotetrameric complexes with HEI10 and/or ZIP4 to promote class I COs formation. Does not seem to be involved in early meiotic recombination steps involving double-strand break (DSB) formation, processing, and single-strand invasion. Does not seem to be involved in homologous pairing or synaptonemal complex (SC) assembly. The protein is Protein PARTING DANCERS homolog of Oryza sativa subsp. japonica (Rice).